A 651-amino-acid polypeptide reads, in one-letter code: Maternal embryonic leucine zipper kinase (651 aa).

A Protein kinase domain is found at 11 to 263; the sequence is YELHETIGTG…MKNLLNHPWI (253 aa). ATP contacts are provided by residues 17-25 and Lys-40; that span reads IGTGGFAKV. At Thr-56 the chain carries Phosphothreonine; by autocatalysis. The active-site Proton acceptor is Asp-132. Tyr-163 is subject to Phosphotyrosine; by autocatalysis. Thr-167 is subject to Phosphothreonine; by autocatalysis. Phosphoserine; by autocatalysis is present on residues Ser-171 and Ser-253. The UBA-like stretch occupies residues 282 to 321; the sequence is LDDDCVTELSVHHRNNRQTMEDLISLWQYDHLTATYLLLL. The interval 326-651 is autoinhibitory region; the sequence is RGKPVRLRLS…VEDILSSCKV (326 aa). Ser-336, Ser-343, and Ser-356 each carry phosphoserine; by autocatalysis. Tyr-367 carries the phosphotyrosine modification. Residue Ser-391 is modified to Phosphoserine; by autocatalysis. Thr-398 bears the Phosphothreonine; by autocatalysis mark. Ser-407 is subject to Phosphoserine; by autocatalysis. Thr-409 carries the phosphothreonine modification. Position 431 is a phosphoserine; by autocatalysis (Ser-431). Thr-478 bears the Phosphothreonine mark. Phosphothreonine; by autocatalysis is present on Thr-494. A Phosphoserine modification is found at Ser-498. Ser-505 is subject to Phosphoserine; by autocatalysis. At Thr-518 the chain carries Phosphothreonine. Ser-529 carries the phosphoserine; by autocatalysis modification. Ser-529 is subject to Phosphoserine. Thr-539 is subject to Phosphothreonine; by autocatalysis. In terms of domain architecture, KA1 spans 602–651; the sequence is SDFGKVTMQFELEVCQLQKPDVVGIRRQRLKGDAWVYKRLVEDILSSCKV.

It belongs to the protein kinase superfamily. CAMK Ser/Thr protein kinase family. SNF1 subfamily. Monomer. Interacts with ZNF622 and PPP1R8. In terms of processing, autophosphorylated: autophosphorylation of the T-loop at Thr-167 and Ser-171 is required for activation. Thr-478 phosphorylation during mitosis promotes interaction with PPP1R8. Expressed in placenta, kidney, thymus, testis, ovary and intestine.

It localises to the cell membrane. It carries out the reaction L-tyrosyl-[protein] + ATP = O-phospho-L-tyrosyl-[protein] + ADP + H(+). The enzyme catalyses L-seryl-[protein] + ATP = O-phospho-L-seryl-[protein] + ADP + H(+). It catalyses the reaction L-threonyl-[protein] + ATP = O-phospho-L-threonyl-[protein] + ADP + H(+). Its activity is regulated as follows. Activated by autophosphorylation of the T-loop at Thr-167 and Ser-171: in contrast to other members of the SNF1 subfamily, phosphorylation at Thr-167 is not mediated by STK11/LKB1 but via autophosphorylation instead. Inhibited by calcium-binding. Kinase activity is also regulated by reducing agents: dithiothreitol (DTT) or reduced glutathione are required for kinase activity in vitro; such dependence is however not due to the presence of disulfide bonds. Functionally, serine/threonine-protein kinase involved in various processes such as cell cycle regulation, self-renewal of stem cells, apoptosis and splicing regulation. Has a broad substrate specificity; phosphorylates BCL2L14, CDC25B, MAP3K5/ASK1 and ZNF622. Acts as an activator of apoptosis by phosphorylating and activating MAP3K5/ASK1. Acts as a regulator of cell cycle, notably by mediating phosphorylation of CDC25B, promoting localization of CDC25B to the centrosome and the spindle poles during mitosis. Plays a key role in cell proliferation and carcinogenesis. Required for proliferation of embryonic and postnatal multipotent neural progenitors. Phosphorylates and inhibits BCL2L14, possibly leading to affect mammary carcinogenesis by mediating inhibition of the pro-apoptotic function of BCL2L14. Also involved in the inhibition of spliceosome assembly during mitosis by phosphorylating ZNF622, thereby contributing to its redirection to the nucleus. May also play a role in primitive hematopoiesis. This chain is Maternal embryonic leucine zipper kinase (MELK), found in Homo sapiens (Human).